We begin with the raw amino-acid sequence, 276 residues long: Formamidopyrimidine-DNA glycosylase (276 aa).

Pro2 serves as the catalytic Schiff-base intermediate with DNA. Glu3 acts as the Proton donor in catalysis. The active-site Proton donor; for beta-elimination activity is the Lys58. Residues His92, Arg111, and Lys154 each coordinate DNA. An FPG-type zinc finger spans residues 239 to 273 (QVYGHVGEECPRCGNIFEKIKVSGRGTTFCPHCQV). Arg263 serves as the catalytic Proton donor; for delta-elimination activity.

This sequence belongs to the FPG family. Monomer. Zn(2+) serves as cofactor.

The enzyme catalyses Hydrolysis of DNA containing ring-opened 7-methylguanine residues, releasing 2,6-diamino-4-hydroxy-5-(N-methyl)formamidopyrimidine.. It catalyses the reaction 2'-deoxyribonucleotide-(2'-deoxyribose 5'-phosphate)-2'-deoxyribonucleotide-DNA = a 3'-end 2'-deoxyribonucleotide-(2,3-dehydro-2,3-deoxyribose 5'-phosphate)-DNA + a 5'-end 5'-phospho-2'-deoxyribonucleoside-DNA + H(+). In terms of biological role, involved in base excision repair of DNA damaged by oxidation or by mutagenic agents. Acts as a DNA glycosylase that recognizes and removes damaged bases. Has a preference for oxidized purines, such as 7,8-dihydro-8-oxoguanine (8-oxoG). Has AP (apurinic/apyrimidinic) lyase activity and introduces nicks in the DNA strand. Cleaves the DNA backbone by beta-delta elimination to generate a single-strand break at the site of the removed base with both 3'- and 5'-phosphates. In Lactobacillus acidophilus (strain ATCC 700396 / NCK56 / N2 / NCFM), this protein is Formamidopyrimidine-DNA glycosylase.